Reading from the N-terminus, the 89-residue chain is DNA/RNA-binding protein Alba (89 aa).

K11 bears the N6-acetyllysine mark.

The protein belongs to the histone-like Alba family. In terms of processing, acetylated. Acetylation at Lys-11 decreases DNA-binding affinity.

The protein localises to the cytoplasm. It is found in the chromosome. Its function is as follows. Binds double-stranded DNA tightly but without sequence specificity. Involved in DNA compaction. In Thermoplasma volcanium (strain ATCC 51530 / DSM 4299 / JCM 9571 / NBRC 15438 / GSS1), this protein is DNA/RNA-binding protein Alba.